Reading from the N-terminus, the 176-residue chain is Inner membrane-spanning protein YciB (176 aa).

Transmembrane regions (helical) follow at residues 3–23 (FLFD…WGIF), 24–44 (TATA…AFRH), 49–69 (TMLW…LVLH), 81–101 (LYWL…NNLI), 121–141 (VAWA…VHNF), and 149–169 (FKLF…SLWL).

The protein belongs to the YciB family.

Its subcellular location is the cell inner membrane. Its function is as follows. Plays a role in cell envelope biogenesis, maintenance of cell envelope integrity and membrane homeostasis. The protein is Inner membrane-spanning protein YciB of Burkholderia lata (strain ATCC 17760 / DSM 23089 / LMG 22485 / NCIMB 9086 / R18194 / 383).